The following is a 368-amino-acid chain: MLTNSEKSRFFLADLTGEVQSIPNTYGYISNLGLFRSAPITQTTFLMDLTDWDVSLLDAVDRDSRKAETSAPERVRQISFPMMYFKEVESITPDEIQGVRQPGTANELTTEAVVRAKKLMKIRTKFDITREFLFMQALKGKVVDARGTLYADLYKQFDVEKKTIYFDLDNPNADIDASIEELRMHMEDEAKTGTVINGEEIHVVVDRVFFSKLTKHPKIRDAYLAQQTPLAWQQITGSLRTGGADGVQAHMNTFYYGGVKFVQYNGKFKDKRGKVHTLVSIDSVADTVGVGHAFPNVAMLGEANNIFEVAYGPCPKMGYANTLGQELYVFEYEKDRDEGIDFEAHSYMLPYCTRPQLLVDVRADAKGG.

Belongs to the lambda phage major capsid protein family. As to quaternary structure, homomultimer.

Its subcellular location is the virion. It is found in the host cytoplasm. Its function is as follows. Assembles to form an icosahedral capsid. The assembly is primed by the interaction between capsid assembly protease and portal dodecamer, and major capsid proteins assemble cooperatively to form the procapsid with the help of capsid scaffolding protein. Major capsid protein forms hexons and pentons of the icosahedron. Viral genomic DNA is packaged into the procapsid through the portal vertex. The packaging triggers a dramatic reconfiguration of the capsid shell. This Salmonella (Bacteriophage Felix O1) protein is Major capsid protein.